The primary structure comprises 369 residues: 4-hydroxyproline betaine 2-epimerase (369 aa).

Substrate contacts are provided by Tyr56 and Gln162. Residue Lys164 is the Proton donor/acceptor of the active site. Mg(2+) is bound by residues Asp194, Glu219, and Asp242. Lys266 (proton donor/acceptor) is an active-site residue. Ala295 contributes to the substrate binding site.

This sequence belongs to the mandelate racemase/muconate lactonizing enzyme family. The cofactor is Mg(2+).

It catalyses the reaction trans-4-hydroxy-L-proline betaine = cis-4-hydroxy-D-proline betaine. The enzyme catalyses L-proline betaine = D-proline betaine. Functionally, catalyzes the 2-epimerization of trans-4-hydroxy-L-proline betaine (tHyp-B) to cis-4-hydroxy-D-proline betaine (cHyp-B). Is involved in a catabolic pathway that degrades tHyp-B to alpha-ketoglutarate. This pathway would permit the utilization of tHyp-B as a carbon and nitrogen source in the absence of osmotic stress, since tHyp-B functions as an osmolyte and is not catabolized when it is needed as osmoprotectant. Can also catalyze the racemization of L-proline betaine. This Paracoccus denitrificans (strain Pd 1222) protein is 4-hydroxyproline betaine 2-epimerase (hpbD).